The following is a 95-amino-acid chain: Large ribosomal subunit protein uL23 (95 aa).

The protein belongs to the universal ribosomal protein uL23 family. As to quaternary structure, part of the 50S ribosomal subunit. Contacts protein L29, and trigger factor when it is bound to the ribosome.

One of the early assembly proteins it binds 23S rRNA. One of the proteins that surrounds the polypeptide exit tunnel on the outside of the ribosome. Forms the main docking site for trigger factor binding to the ribosome. This is Large ribosomal subunit protein uL23 from Solibacter usitatus (strain Ellin6076).